The chain runs to 124 residues: Small ribosomal subunit protein uS12 (124 aa).

Aspartate 89 is subject to 3-methylthioaspartic acid.

It belongs to the universal ribosomal protein uS12 family. As to quaternary structure, part of the 30S ribosomal subunit. Contacts proteins S8 and S17. May interact with IF1 in the 30S initiation complex.

Functionally, with S4 and S5 plays an important role in translational accuracy. Interacts with and stabilizes bases of the 16S rRNA that are involved in tRNA selection in the A site and with the mRNA backbone. Located at the interface of the 30S and 50S subunits, it traverses the body of the 30S subunit contacting proteins on the other side and probably holding the rRNA structure together. The combined cluster of proteins S8, S12 and S17 appears to hold together the shoulder and platform of the 30S subunit. The protein is Small ribosomal subunit protein uS12 of Hamiltonella defensa subsp. Acyrthosiphon pisum (strain 5AT).